Reading from the N-terminus, the 215-residue chain is Orotate phosphoribosyltransferase (215 aa).

Lys-26 is a 5-phospho-alpha-D-ribose 1-diphosphate binding site. Residue 34-35 (FF) participates in orotate binding. 5-phospho-alpha-D-ribose 1-diphosphate-binding positions include 72–73 (YK), Arg-99, Lys-100, Lys-103, His-105, and 124–132 (DDVITAGTA). Residues Thr-128 and Arg-156 each coordinate orotate.

It belongs to the purine/pyrimidine phosphoribosyltransferase family. PyrE subfamily. In terms of assembly, homodimer. Requires Mg(2+) as cofactor.

It carries out the reaction orotidine 5'-phosphate + diphosphate = orotate + 5-phospho-alpha-D-ribose 1-diphosphate. It functions in the pathway pyrimidine metabolism; UMP biosynthesis via de novo pathway; UMP from orotate: step 1/2. In terms of biological role, catalyzes the transfer of a ribosyl phosphate group from 5-phosphoribose 1-diphosphate to orotate, leading to the formation of orotidine monophosphate (OMP). This Shewanella oneidensis (strain ATCC 700550 / JCM 31522 / CIP 106686 / LMG 19005 / NCIMB 14063 / MR-1) protein is Orotate phosphoribosyltransferase.